Here is a 207-residue protein sequence, read N- to C-terminus: Cytochrome c biogenesis ATP-binding export protein CcmA (207 aa).

The ABC transporter domain occupies 3–206 (LMAEGLSARR…AKSLEMTGFV (204 aa)). 35–42 (GPNGAGKS) lines the ATP pocket.

The protein belongs to the ABC transporter superfamily. CcmA exporter (TC 3.A.1.107) family. As to quaternary structure, the complex is composed of two ATP-binding proteins (CcmA) and two transmembrane proteins (CcmB).

The protein localises to the cell inner membrane. It carries out the reaction heme b(in) + ATP + H2O = heme b(out) + ADP + phosphate + H(+). Its function is as follows. Part of the ABC transporter complex CcmAB involved in the biogenesis of c-type cytochromes; once thought to export heme, this seems not to be the case, but its exact role is uncertain. Responsible for energy coupling to the transport system. The chain is Cytochrome c biogenesis ATP-binding export protein CcmA from Rhizobium meliloti (strain 1021) (Ensifer meliloti).